A 572-amino-acid chain; its full sequence is Proline--tRNA ligase (572 aa).

Belongs to the class-II aminoacyl-tRNA synthetase family. ProS type 1 subfamily. Homodimer. May form a tertiary complex with YbaK and t-RNA(Pro).

It is found in the cytoplasm. The catalysed reaction is tRNA(Pro) + L-proline + ATP = L-prolyl-tRNA(Pro) + AMP + diphosphate. Catalyzes the attachment of proline to tRNA(Pro) in a two-step reaction: proline is first activated by ATP to form Pro-AMP and then transferred to the acceptor end of tRNA(Pro). As ProRS can inadvertently accommodate and process non-cognate amino acids such as alanine and cysteine, to avoid such errors it has two additional distinct editing activities against alanine. One activity is designated as 'pretransfer' editing and involves the tRNA(Pro)-independent hydrolysis of activated Ala-AMP. The other activity is designated 'posttransfer' editing and involves deacylation of mischarged Ala-tRNA(Pro). The misacylated Cys-tRNA(Pro) is not edited by ProRS, but is probably edited in trans by YbaK. This Haemophilus influenzae (strain ATCC 51907 / DSM 11121 / KW20 / Rd) protein is Proline--tRNA ligase.